A 192-amino-acid polypeptide reads, in one-letter code: Probable GTP-binding protein EngB (192 aa).

The EngB-type G domain occupies Gly-22–Gln-192. GTP is bound by residues Gly-30–Ser-37, Gly-57–Leu-61, Asp-75–Gly-78, Thr-142–Asp-145, and Tyr-172–Ser-174. 2 residues coordinate Mg(2+): Ser-37 and Thr-59.

Belongs to the TRAFAC class TrmE-Era-EngA-EngB-Septin-like GTPase superfamily. EngB GTPase family. It depends on Mg(2+) as a cofactor.

Necessary for normal cell division and for the maintenance of normal septation. The chain is Probable GTP-binding protein EngB from Chlorobaculum parvum (strain DSM 263 / NCIMB 8327) (Chlorobium vibrioforme subsp. thiosulfatophilum).